Here is a 132-residue protein sequence, read N- to C-terminus: Small ribosomal subunit protein uS8 (132 aa).

It belongs to the universal ribosomal protein uS8 family. In terms of assembly, part of the 30S ribosomal subunit. Contacts proteins S5 and S12.

One of the primary rRNA binding proteins, it binds directly to 16S rRNA central domain where it helps coordinate assembly of the platform of the 30S subunit. The protein is Small ribosomal subunit protein uS8 of Rhodopseudomonas palustris (strain BisA53).